The primary structure comprises 360 residues: Phosphoserine aminotransferase (360 aa).

Arg41 is a binding site for L-glutamate. Pyridoxal 5'-phosphate is bound by residues Trp101, Thr152, Asp172, and Gln195. Residue Lys196 is modified to N6-(pyridoxal phosphate)lysine. 237 to 238 contributes to the pyridoxal 5'-phosphate binding site; the sequence is NT.

It belongs to the class-V pyridoxal-phosphate-dependent aminotransferase family. SerC subfamily. As to quaternary structure, homodimer. The cofactor is pyridoxal 5'-phosphate.

It is found in the cytoplasm. The enzyme catalyses O-phospho-L-serine + 2-oxoglutarate = 3-phosphooxypyruvate + L-glutamate. The catalysed reaction is 4-(phosphooxy)-L-threonine + 2-oxoglutarate = (R)-3-hydroxy-2-oxo-4-phosphooxybutanoate + L-glutamate. It participates in amino-acid biosynthesis; L-serine biosynthesis; L-serine from 3-phospho-D-glycerate: step 2/3. It functions in the pathway cofactor biosynthesis; pyridoxine 5'-phosphate biosynthesis; pyridoxine 5'-phosphate from D-erythrose 4-phosphate: step 3/5. Functionally, catalyzes the reversible conversion of 3-phosphohydroxypyruvate to phosphoserine and of 3-hydroxy-2-oxo-4-phosphonooxybutanoate to phosphohydroxythreonine. This is Phosphoserine aminotransferase from Paraburkholderia phymatum (strain DSM 17167 / CIP 108236 / LMG 21445 / STM815) (Burkholderia phymatum).